A 221-amino-acid polypeptide reads, in one-letter code: Interleukin-12 subunit alpha (221 aa).

A signal peptide spans 1–25 (MCPLRSLLLISTLVLLHHLPHLSLG). 3 cysteine pairs are disulfide-bonded: Cys39–Cys112, Cys66–Cys198, and Cys87–Cys125. Asn95 carries N-linked (GlcNAc...) asparagine glycosylation.

Belongs to the IL-6 superfamily. In terms of assembly, heterodimer with IL12B; disulfide-linked. This heterodimer is known as interleukin IL-12. Heterodimer with EBI3/IL27B; not disulfide-linked. This heterodimer is known as interleukin IL-35. Interacts with NBR1; this interaction promotes IL-12 secretion.

It localises to the secreted. Its function is as follows. Heterodimerizes with IL12B to form the IL-12 cytokine or with EBI3/IL27B to form the IL-35 cytokine. IL-12 is primarily produced by professional antigen-presenting cells (APCs) such as B-cells and dendritic cells (DCs) as well as macrophages and granulocytes and regulates T-cell and natural killer-cell responses, induces the production of interferon-gamma (IFN-gamma), favors the differentiation of T-helper 1 (Th1) cells and is an important link between innate resistance and adaptive immunity. Mechanistically, exerts its biological effects through a receptor composed of IL12R1 and IL12R2 subunits. Binding to the receptor results in the rapid tyrosine phosphorylation of a number of cellular substrates including the JAK family kinases TYK2 and JAK2. In turn, recruited STAT4 gets phosphorylated and translocates to the nucleus where it regulates cytokine/growth factor responsive genes. As part of IL-35, plays essential roles in maintaining the immune homeostasis of the liver microenvironment and also functions as an immune-suppressive cytokine. Mediates biological events through unconventional receptors composed of IL12RB2 and gp130/IL6ST heterodimers or homodimers. Signaling requires the transcription factors STAT1 and STAT4, which form a unique heterodimer that binds to distinct DNA sites. The polypeptide is Interleukin-12 subunit alpha (IL12A) (Capra hircus (Goat)).